The primary structure comprises 213 residues: AN1-type zinc finger protein 5 (213 aa).

Residues 8–42 (TPGPMLCSTGCGFYGNPRTNGMCSVCYKEHLQRQQ) form an A20-type zinc finger. Residues Cys-14, Cys-18, Cys-30, and Cys-33 each coordinate Zn(2+). Positions 39–149 (QRQQNSGRMS…EEKAPELPKP (111 aa)) are disordered. Residues 40–66 (RQQNSGRMSPMGTASGSNSPTSDSASV) are compositionally biased toward polar residues. 2 positions are modified to phosphoserine: Ser-48 and Ser-58. The segment covering 120–138 (SEPVVTQPSPSVSQPSSSQ) has biased composition (low complexity). Positions 139 to 148 (SEEKAPELPK) are enriched in basic and acidic residues. The AN1-type zinc-finger motif lies at 148–194 (KPKKNRCFMCRKKVGLTGFDCRCGNLFCGLHRYSDKHNCPYDYKAEA). Zn(2+) contacts are provided by Cys-154, Cys-157, Cys-168, Cys-170, Cys-175, His-178, His-184, and Cys-186. Position 209 is an N6-acetyllysine (Lys-209).

In terms of assembly, homooligomer and/or heterooligomer. Interacts (via A20-type domain) with IKBKG and RIPK1 and with TRAF6 (via AN1-type domain). Interacts with ubiquitin and polyubiquitinated proteins. Identified in a heterotrimeric complex with ubiquitin and SQSTM1, where ZFAND5 and SQSTM1 both interact with the same ubiquitin molecule.

It localises to the cytoplasm. In terms of biological role, involved in protein degradation via the ubiquitin-proteasome system. May act by anchoring ubiquitinated proteins to the proteasome. Plays a role in ubiquitin-mediated protein degradation during muscle atrophy. Plays a role in the regulation of NF-kappa-B activation and apoptosis. Inhibits NF-kappa-B activation triggered by overexpression of RIPK1 and TRAF6 but not of RELA. Also inhibits tumor necrosis factor (TNF), IL-1 and TLR4-induced NF-kappa-B activation in a dose-dependent manner. Overexpression sensitizes cells to TNF-induced apoptosis. Is a potent inhibitory factor for osteoclast differentiation. This is AN1-type zinc finger protein 5 (Zfand5) from Rattus norvegicus (Rat).